The chain runs to 50 residues: MEYRGGWYSYFLCGVLSGKGARRAGAIERVENLYAFFFACYHAPTSGGLK.

This is an uncharacterized protein from Treponema pallidum (strain Nichols).